An 89-amino-acid polypeptide reads, in one-letter code: Co-chaperonin GroES (89 aa).

Belongs to the GroES chaperonin family. In terms of assembly, heptamer of 7 subunits arranged in a ring. Interacts with the chaperonin GroEL.

It is found in the cytoplasm. Its function is as follows. Together with the chaperonin GroEL, plays an essential role in assisting protein folding. The GroEL-GroES system forms a nano-cage that allows encapsulation of the non-native substrate proteins and provides a physical environment optimized to promote and accelerate protein folding. GroES binds to the apical surface of the GroEL ring, thereby capping the opening of the GroEL channel. The polypeptide is Co-chaperonin GroES (Fervidobacterium nodosum (strain ATCC 35602 / DSM 5306 / Rt17-B1)).